The chain runs to 90 residues: Small ribosomal subunit protein uS17 (90 aa).

Belongs to the universal ribosomal protein uS17 family. Part of the 30S ribosomal subunit.

One of the primary rRNA binding proteins, it binds specifically to the 5'-end of 16S ribosomal RNA. This is Small ribosomal subunit protein uS17 from Treponema denticola (strain ATCC 35405 / DSM 14222 / CIP 103919 / JCM 8153 / KCTC 15104).